A 132-amino-acid chain; its full sequence is Ubiquinol-cytochrome c reductase complex assembly factor 4 (132 aa).

The signal sequence occupies residues 1-15 (MNRVLCAPAAGAVRA). At 16-78 (LRLIGWASRS…GKGHQRPWWK (63 aa)) the chain is on the mitochondrial matrix side. The interval 29–72 (LPGSRDRAHPAAEEEDDPDRPIEFSSSKANPHRWSVGHTMGKGH) is disordered. Residues 79–95 (VLPLSCFLVALIIWCYL) form a helical membrane-spanning segment. At 96–132 (REESEADQWLRQVWGEVPEPSDRSEEPETPAAYRART) the chain is on the mitochondrial intermembrane side. The disordered stretch occupies residues 110 to 132 (GEVPEPSDRSEEPETPAAYRART).

Belongs to the UQCC4 family. As to quaternary structure, forms a complex, named COMB/coordinator of mitochondrial CYTB biogenesis, composed of UQCC1, UQCC2, UQCC4, UQCC5 and UQCC6; stabilizes nascent cytochrome b/MT-CYB and promotes its membrane insertion. Forms a complex, named COMA, composed of UQCC1, UQCC2 and UQCC4; activates MT-CYB translation. Forms a complex, named COMC, composed of UQCC1, UQCC2; UQCC3 and UQCC4; mediates MT-CYB hemylation and association with the first nuclear-encoded complex III subunit UQCRQ. Complexes COMA and COMB are bound to the mitochondrion inner membrane by UQCC4.

The protein localises to the mitochondrion inner membrane. Its function is as follows. Required for the assembly and stability of the mitochondrial ubiquinol-cytochrome c reductase complex (complex III (CIII) or cytochrome b-c1 complex), a multisubunit transmembrane complex that is part of the mitochondrial electron transport chain (ETC) which drives oxidative phosphorylation. This chain is Ubiquinol-cytochrome c reductase complex assembly factor 4, found in Homo sapiens (Human).